A 549-amino-acid chain; its full sequence is Glucose-6-phosphate isomerase (549 aa).

The Proton donor role is filled by glutamate 355. Residues histidine 386 and lysine 514 contribute to the active site.

It belongs to the GPI family.

The protein resides in the cytoplasm. It catalyses the reaction alpha-D-glucose 6-phosphate = beta-D-fructose 6-phosphate. It functions in the pathway carbohydrate biosynthesis; gluconeogenesis. Its pathway is carbohydrate degradation; glycolysis; D-glyceraldehyde 3-phosphate and glycerone phosphate from D-glucose: step 2/4. Catalyzes the reversible isomerization of glucose-6-phosphate to fructose-6-phosphate. This Klebsiella pneumoniae (strain 342) protein is Glucose-6-phosphate isomerase.